The chain runs to 488 residues: Sucrose phosphorylase (488 aa).

Residues aspartate 50, histidine 88, 191-193 (RLD), glutamate 233, 290-291 (HD), 341-344 (DLYQ), and arginine 398 contribute to the sucrose site. The active-site Nucleophile is aspartate 193. The active-site Proton donor is the glutamate 233.

This sequence belongs to the glycosyl hydrolase 13 family. Sucrose phosphorylase subfamily.

It catalyses the reaction sucrose + phosphate = D-fructose + alpha-D-glucose 1-phosphate. This chain is Sucrose phosphorylase, found in Agrobacterium vitis (Rhizobium vitis).